We begin with the raw amino-acid sequence, 150 residues long: UPF0178 protein Bcep1808_1605 (150 aa).

This sequence belongs to the UPF0178 family.

The sequence is that of UPF0178 protein Bcep1808_1605 from Burkholderia vietnamiensis (strain G4 / LMG 22486) (Burkholderia cepacia (strain R1808)).